The chain runs to 414 residues: Lysocardiolipin acyltransferase 1 (414 aa).

Helical transmembrane passes span 47–67 (FILT…SPFL) and 86–106 (ATWL…KVII). The short motif at 123–128 (HRTRMD) is the HXXXXD motif element. K221 bears the N6-acetyllysine mark. 2 consecutive transmembrane segments (helical) span residues 340–360 (LRVL…SPAM) and 362–382 (LLIY…VIFV).

The protein belongs to the 1-acyl-sn-glycerol-3-phosphate acyltransferase family. Expressed at higher level in heart, kidney and pancreas than in brain, spleen, liver, lung, small intestine and placenta.

It localises to the endoplasmic reticulum membrane. It catalyses the reaction a 1-acyl-sn-glycero-3-phosphate + an acyl-CoA = a 1,2-diacyl-sn-glycero-3-phosphate + CoA. The catalysed reaction is a 1-acyl-sn-glycero-3-phospho-(1D-myo-inositol) + an acyl-CoA = a 1,2-diacyl-sn-glycero-3-phospho-(1D-myo-inositol) + CoA. It carries out the reaction 1-acyl-sn-glycero-3-phospho-(1'-sn-glycerol) + an acyl-CoA = a 1,2-diacyl-sn-glycero-3-phospho-(1'-sn-glycerol) + CoA. The enzyme catalyses 1-hexadecanoyl-sn-glycero-3-phosphate + (9Z)-octadecenoyl-CoA = 1-hexadecanoyl-2-(9Z-octadecenoyl)-sn-glycero-3-phosphate + CoA. It catalyses the reaction 1-(9Z-octadecenoyl)-sn-glycero-3-phosphate + (9Z)-octadecenoyl-CoA = 1,2-di-(9Z-octadecenoyl)-sn-glycero-3-phosphate + CoA. The catalysed reaction is 1-(9Z,12Z)-octadecadienoyl-sn-glycero-3-phosphate + (9Z)-octadecenoyl-CoA = 1-(9Z,12Z)-octadecadienoyl-2-(9Z)-octadecenoyl-sn-glycero-3-phosphate + CoA. It carries out the reaction 1-(9Z,12Z,15Z)-octadecatrienoyl-sn-glycero-3-phosphate + (9Z)-octadecenoyl-CoA = 1-(9Z,12Z,15Z)-octadecatrienoyl-2-(9Z)-octadecenoyl-sn-glycero-3-phosphate + CoA. The enzyme catalyses 1-(9Z-octadecenoyl)-sn-glycero-3-phosphate + hexadecanoyl-CoA = 1-(9Z)-octadecenoyl-2-hexadecanoyl-sn-glycero-3-phosphate + CoA. It catalyses the reaction 1-(9Z-octadecenoyl)-sn-glycero-3-phosphate + octadecanoyl-CoA = 1-(9Z-octadecenoyl)-2-octadecanoyl-sn-glycero-3-phosphate + CoA. The catalysed reaction is 1-acyl-sn-glycero-3-phospho-(1'-sn-glycerol) + (9Z)-octadecenoyl-CoA = 1-acyl-2-(9Z-octadecenoyl)-sn-glycero-3-phospho-(1'-sn-glycerol) + CoA. It carries out the reaction a 1-acyl-sn-glycero-3-phospho-(1D-myo-inositol) + (9Z)-octadecenoyl-CoA = a 1-acyl-2-(9Z-octadecenoyl)-sn-glycero-3-phospho-(1D-myo-inositol) + CoA. The enzyme catalyses 1-hexadecanoyl-sn-glycero-3-phospho-(1D-myo-inositol) + hexadecanoyl-CoA = 1,2-dihexadecanoyl-sn-glycero-3-phospho-(1D-myo-inositol) + CoA. It catalyses the reaction 1-hexadecanoyl-sn-glycero-3-phospho-(1D-myo-inositol) + octadecanoyl-CoA = 1-hexadecanoyl-2-octadecanoyl-sn-glycero-3-phospho-(1D-myo-inositol) + CoA. The catalysed reaction is 1-hexadecanoyl-sn-glycero-3-phospho-(1D-myo-inositol) + (9Z)-octadecenoyl-CoA = 1-hexadecanoyl-2-(9Z-octadecenoyl)-sn-glycero-3-phospho-(1D-myo-inositol) + CoA. It carries out the reaction 1-hexadecanoyl-sn-glycero-3-phospho-(1D-myo-inositol) + (9Z,12Z)-octadecadienoyl-CoA = 1-hexadecanoyl-2-(9Z,12Z-octadecadienoyl)-sn-glycero-3-phospho-(1D-myo-inositol) + CoA. The enzyme catalyses 1-hexadecanoyl-sn-glycero-3-phospho-(1D-myo-inositol) + (5Z,8Z,11Z,14Z)-eicosatetraenoyl-CoA = 1-hexadecanoyl-2-(5Z,8Z,11Z,14Z-eicosatetraenoyl)-sn-glycero-3-phospho-D-myo-inositol + CoA. It catalyses the reaction 1-hexadecanoyl-sn-glycero-3-phospho-(1'-sn-glycerol) + hexadecanoyl-CoA = 1,2-dihexadecanoyl-sn-glycero-3-phospho-(1'-sn-glycerol) + CoA. The catalysed reaction is 1-hexadecanoyl-sn-glycero-3-phospho-(1'-sn-glycerol) + octadecanoyl-CoA = 1-hexadecanoyl-2-octadecanoyl-sn-glycero-3-phospho-(1'-sn-glycerol) + CoA. It carries out the reaction 1-hexadecanoyl-sn-glycero-3-phospho-(1'-sn-glycerol) + (9Z)-octadecenoyl-CoA = 1-hexadecanoyl-2-(9Z-octadecenoyl)-sn-glycero-3-phospho-(1'-sn-glycerol) + CoA. The enzyme catalyses 1-hexadecanoyl-sn-glycero-3-phospho-(1'-sn-glycerol) + (9Z,12Z)-octadecadienoyl-CoA = 1-hexadecanoyl-2-(9Z,12Z-octadecadienoyl)-sn-glycero-3-phospho-(1'-sn-glycerol) + CoA. It catalyses the reaction 1-tetradecanoyl-sn-glycero-3-phospho-(1'-sn-glycerol) + (9Z)-octadecenoyl-CoA = 1-tetradecanoyl-2-(9Z-octadecenoyl)-sn-glycero-3-phospho-(1'-sn-glycerol) + CoA. The catalysed reaction is 1-octadecanoyl-sn-glycero-3-phospho-(1'-sn-glycerol) + (9Z)-octadecenoyl-CoA = 1-octadecanoyl-2-(9Z-octadecenoyl)-sn-glycero-3-phospho-(1'-sn-glycerol) + CoA. It carries out the reaction 1-(9Z-octadecenoyl)-sn-glycero-3-phospho-(1'-sn-glycerol) + (9Z)-octadecenoyl-CoA = 1,2-di-(9Z-octadecenoyl)-sn-glycero-3-phospho-(1'-sn-glycerol) + CoA. The enzyme catalyses 1-hexadecanoyl-sn-glycero-3-phospho-(1D-myo-inositol) + dodecanoyl-CoA = 1-hexadecanoyl-2-dodecanoyl-sn-glycero-3-phospho-(1D-myo-inositol) + CoA. It catalyses the reaction 1',3'-bis-[1-acyl-sn-glycero-3-phospho]-glycerol + (9Z)-octadecenoyl-CoA = 1'-[1-acyl-2-(9Z)-octadecenoyl-sn-glycero-3-phospho],3'-[1-acyl,2-hydroxy-sn-glycero-3-phospho]-glycerol + CoA. The catalysed reaction is 1'-[1,2-diacyl-sn-glycero-3-phospho],3'-[1-acyl-sn-glycero-3-phospho]-glycerol + (9Z)-octadecenoyl-CoA = 1'-[1,2-diacyl-sn-glycero-3-phospho],3'-[1-acyl,2-(9Z)-octadecenoyl-sn-glycero-3-phospho]-glycerol + CoA. It carries out the reaction 1'-[1,2-diacyl-sn-glycero-3-phospho],3'-[1-acyl-sn-glycero-3-phospho]-glycerol + (9Z,12Z)-octadecadienoyl-CoA = 1'-[1,2-diacyl-sn-glycero-3-phospho],3'-[1-acyl,2-(9Z,12Z)-octadecadienoyl-sn-glycero-3-phospho]-glycerol + CoA. The enzyme catalyses 1'-[1,2-diacyl-sn-glycero-3-phospho],3'-[1-acyl-sn-glycero-3-phospho]-glycerol + dodecanoyl-CoA = 1'-[1,2-diacyl-sn-glycero-3-phospho],3'-[1-acyl,2-dodecanoyl-sn-glycero-3-phospho]-glycerol + CoA. It catalyses the reaction 1',3'-bis-[1-acyl-sn-glycero-3-phospho]-glycerol + dodecanoyl-CoA = 1'-[1-acyl-2-dodecanoyl-sn-glycero-3-phospho],3'-[1-acyl,2-hydroxy-sn-glycero-3-phospho]-glycerol + CoA. The catalysed reaction is a 1-acyl-sn-glycero-3-phosphate + (9Z)-octadecenoyl-CoA = a 1-acyl-2-(9Z-octadecenoyl)-sn-glycero-3-phosphate + CoA. It carries out the reaction 1',3'-bis-[1-acyl-sn-glycero-3-phospho]-glycerol + (9Z,12Z)-octadecadienoyl-CoA = 1'-[1-acyl-2-(9Z,12Z)-octadecadienoyl-sn-glycero-3-phospho],3'-[1-acyl,2-hydroxy-sn-glycero-3-phospho]-glycerol + CoA. The enzyme catalyses 1',3'-bis-[1-acyl-sn-glycero-3-phospho]-glycerol + hexadecanoyl-CoA = 1'-[1-acyl-2-hexadecanoyl-sn-glycero-3-phospho],3'-[1-acyl,2-hydroxy-sn-glycero-3-phospho]-glycerol + CoA. It catalyses the reaction 1',3'-bis-[1-acyl-sn-glycero-3-phospho]-glycerol + octadecanoyl-CoA = 1'-[1-acyl-2-octadecanoyl-sn-glycero-3-phospho],3'-[1-acyl,2-hydroxy-sn-glycero-3-phospho]-glycerol + CoA. The catalysed reaction is 1'-[1,2-diacyl-sn-glycero-3-phospho],3'-[1-acyl-sn-glycero-3-phospho]-glycerol + octanoyl-CoA = 1'-[1,2-diacyl-sn-glycero-3-phospho],3'-[1-acyl,2-octanoyl-sn-glycero-3-phospho]-glycerol + CoA. It carries out the reaction 1',3'-bis-[1-acyl-sn-glycero-3-phospho]-glycerol + octanoyl-CoA = 1'-[1-acyl-2-octanoyl-sn-glycero-3-phospho],3'-[1-acyl,2-hydroxy-sn-glycero-3-phospho]-glycerol + CoA. The enzyme catalyses 1'-[1,2-diacyl-sn-glycero-3-phospho],3'-[1-acyl-sn-glycero-3-phospho]-glycerol + hexadecanoyl-CoA = 1'-[1,2-diacyl-sn-glycero-3-phospho],3'-[1-acyl,2-hexadecanoyl-sn-glycero-3-phospho]-glycerol + CoA. It catalyses the reaction 1'-[1,2-diacyl-sn-glycero-3-phospho],3'-[1-acyl-sn-glycero-3-phospho]-glycerol + (5Z,8Z,11Z,14Z)-eicosatetraenoyl-CoA = 1'-[1,2-diacyl-sn-glycero-3-phospho],3'-[1-acyl,2-(5Z,8Z,11Z,14Z)-eicosatetraenoyl-sn-glycero-3-phospho]-glycerol + CoA. The catalysed reaction is 1',3'-bis-[1-acyl-sn-glycero-3-phospho]-glycerol + (5Z,8Z,11Z,14Z)-eicosatetraenoyl-CoA = 1'-[1-acyl-2-(5Z,8Z,11Z,14Z)-eicosatetraenoyl-sn-glycero-3-phospho],3'-[1-acyl,2-hydroxy-sn-glycero-3-phospho]-glycerol + CoA. It carries out the reaction a 1-acyl-sn-glycero-3-phospho-(1D-myo-inositol) + octadecanoyl-CoA = a 1-acyl-2-octadecanoyl-sn-glycero-3-phospho-(1D-myo-inositol) + CoA. The enzyme catalyses a 2-acyl-sn-glycero-3-phospho-D-myo-inositol + octadecanoyl-CoA = 1-octadecanoyl-2-acyl-sn-glycero-3-phospho-1D-myo-inositol + CoA. It functions in the pathway phospholipid metabolism; CDP-diacylglycerol biosynthesis; CDP-diacylglycerol from sn-glycerol 3-phosphate: step 2/3. Functionally, exhibits acyl-CoA:lysocardiolipin acyltransferase (ALCAT) activity; catalyzes the reacylation of lyso-cardiolipin to cardiolipin (CL), a key step in CL remodeling. Recognizes both monolysocardiolipin and dilysocardiolipin as substrates with a preference for linoleoyl-CoA and oleoyl-CoA as acyl donors. Also exhibits 1-acyl-sn-glycerol-3-phosphate acyltransferase activity (AGPAT) activity; converts 1-acyl-sn-glycerol-3- phosphate (lysophosphatidic acid or LPA) into 1,2-diacyl-sn-glycerol-3- phosphate (phosphatidic acid or PA) by incorporating an acyl moiety at the sn-2 position of the glycerol backbone. Possesses both lysophosphatidylinositol acyltransferase (LPIAT) and lysophosphatidylglycerol acyltransferase (LPGAT) activities. Required for establishment of the hematopoietic and endothelial lineages. This is Lysocardiolipin acyltransferase 1 (LCLAT1) from Homo sapiens (Human).